The primary structure comprises 606 residues: Sulfite reductase [NADPH] flavoprotein alpha-component (606 aa).

One can recognise a Flavodoxin-like domain in the interval 68–206 (ITILSASQTG…AAEAWRKEVT (139 aa)). Residues 74-79 (SQTGNA), 121-124 (STQG), and 157-166 (LGDITYEHFA) each bind FMN. The FAD-binding FR-type domain occupies 240 to 454 (ESPLTATLSV…VEHNDNFRLP (215 aa)). FAD contacts are provided by residues T328, Q362, 392-395 (RLYS), 410-412 (TVG), Y416, and 425-428 (GGAS). NADP(+) contacts are provided by residues 525-526 (SR), 531-535 (KVYVQ), and D568. Y606 provides a ligand contact to FAD.

It belongs to the NADPH-dependent sulphite reductase flavoprotein subunit CysJ family. In the N-terminal section; belongs to the flavodoxin family. This sequence in the C-terminal section; belongs to the flavoprotein pyridine nucleotide cytochrome reductase family. As to quaternary structure, alpha(8)-beta(8). The alpha component is a flavoprotein, the beta component is a hemoprotein. Requires FAD as cofactor. It depends on FMN as a cofactor.

It carries out the reaction hydrogen sulfide + 3 NADP(+) + 3 H2O = sulfite + 3 NADPH + 4 H(+). It functions in the pathway sulfur metabolism; hydrogen sulfide biosynthesis; hydrogen sulfide from sulfite (NADPH route): step 1/1. Component of the sulfite reductase complex that catalyzes the 6-electron reduction of sulfite to sulfide. This is one of several activities required for the biosynthesis of L-cysteine from sulfate. The flavoprotein component catalyzes the electron flow from NADPH -&gt; FAD -&gt; FMN to the hemoprotein component. This Zymomonas mobilis subsp. mobilis (strain ATCC 31821 / ZM4 / CP4) protein is Sulfite reductase [NADPH] flavoprotein alpha-component.